The following is a 103-amino-acid chain: Cytochrome c-552 (103 aa).

An N-terminal signal peptide occupies residues 1–22; sequence MKTAWLGTFAASALLVAGYAQA. Heme c is bound by residues Cys32, Cys35, His36, and Met81.

In terms of assembly, monomer. Binds 1 heme c group covalently per subunit.

It localises to the periplasm. Its function is as follows. Monoheme c-type cytochrome. Probable electron donor to membrane cytochrome oxidase and to periplasmic nitrite reductase. The chain is Cytochrome c-552 (cyt) from Nitrosomonas europaea (strain ATCC 19718 / CIP 103999 / KCTC 2705 / NBRC 14298).